The sequence spans 508 residues: Photosystem II CP47 reaction center protein (508 aa).

The next 6 helical transmembrane spans lie at 21–36 (SVHL…WAGS), 101–115 (IILS…IWHW), 140–156 (GVHL…FGVF), 203–218 (IAAG…FHVL), 237–252 (VLSS…AFVV), and 457–472 (SFAL…HGAR).

This sequence belongs to the PsbB/PsbC family. PsbB subfamily. In terms of assembly, PSII is composed of 1 copy each of membrane proteins PsbA, PsbB, PsbC, PsbD, PsbE, PsbF, PsbH, PsbI, PsbJ, PsbK, PsbL, PsbM, PsbT, PsbY, PsbZ, Psb30/Ycf12, at least 3 peripheral proteins of the oxygen-evolving complex and a large number of cofactors. It forms dimeric complexes. It depends on Binds multiple chlorophylls. PSII binds additional chlorophylls, carotenoids and specific lipids. as a cofactor.

The protein localises to the plastid. It is found in the chloroplast thylakoid membrane. Its function is as follows. One of the components of the core complex of photosystem II (PSII). It binds chlorophyll and helps catalyze the primary light-induced photochemical processes of PSII. PSII is a light-driven water:plastoquinone oxidoreductase, using light energy to abstract electrons from H(2)O, generating O(2) and a proton gradient subsequently used for ATP formation. The sequence is that of Photosystem II CP47 reaction center protein from Euglena gracilis.